The sequence spans 105 residues: Large ribosomal subunit protein eL30 (105 aa).

Glycyl lysine isopeptide (Lys-Gly) (interchain with G-Cter in ubiquitin) cross-links involve residues K22, K53, and K83.

The protein belongs to the eukaryotic ribosomal protein eL30 family. In terms of assembly, component of the large ribosomal subunit (LSU). Mature yeast ribosomes consist of a small (40S) and a large (60S) subunit. The 40S small subunit contains 1 molecule of ribosomal RNA (18S rRNA) and 33 different proteins (encoded by 57 genes). The large 60S subunit contains 3 rRNA molecules (25S, 5.8S and 5S rRNA) and 46 different proteins (encoded by 81 genes).

It is found in the cytoplasm. Functionally, component of the ribosome, a large ribonucleoprotein complex responsible for the synthesis of proteins in the cell. The small ribosomal subunit (SSU) binds messenger RNAs (mRNAs) and translates the encoded message by selecting cognate aminoacyl-transfer RNA (tRNA) molecules. The large subunit (LSU) contains the ribosomal catalytic site termed the peptidyl transferase center (PTC), which catalyzes the formation of peptide bonds, thereby polymerizing the amino acids delivered by tRNAs into a polypeptide chain. The nascent polypeptides leave the ribosome through a tunnel in the LSU and interact with protein factors that function in enzymatic processing, targeting, and the membrane insertion of nascent chains at the exit of the ribosomal tunnel. The chain is Large ribosomal subunit protein eL30 from Saccharomyces cerevisiae (strain ATCC 204508 / S288c) (Baker's yeast).